Reading from the N-terminus, the 328-residue chain is Methionyl-tRNA formyltransferase (328 aa).

110 to 113 (SNLP) contacts (6S)-5,6,7,8-tetrahydrofolate.

This sequence belongs to the Fmt family.

The enzyme catalyses L-methionyl-tRNA(fMet) + (6R)-10-formyltetrahydrofolate = N-formyl-L-methionyl-tRNA(fMet) + (6S)-5,6,7,8-tetrahydrofolate + H(+). In terms of biological role, attaches a formyl group to the free amino group of methionyl-tRNA(fMet). The formyl group appears to play a dual role in the initiator identity of N-formylmethionyl-tRNA by promoting its recognition by IF2 and preventing the misappropriation of this tRNA by the elongation apparatus. The protein is Methionyl-tRNA formyltransferase of Bifidobacterium longum (strain DJO10A).